We begin with the raw amino-acid sequence, 682 residues long: Glucan endo-1,3-beta-glucosidase A1 (682 aa).

The first 38 residues, 1-38 (MKPSHFTEKRFMKKVLGLFLVVVMLASVGVLPTSKVQA), serve as a signal peptide directing secretion. One can recognise a GH16 domain in the interval 391–682 (YTFIGNPNAP…VDYVRVYKEQ (292 aa)). Glu-552 acts as the Nucleophile in catalysis. Catalysis depends on Glu-557, which acts as the Proton donor.

The protein belongs to the glycosyl hydrolase 16 family.

The protein resides in the secreted. The catalysed reaction is Hydrolysis of (1-&gt;3)-beta-D-glucosidic linkages in (1-&gt;3)-beta-D-glucans.. Functionally, lysis of cellular walls containing beta-1,3-glucans. Implicated in the defense against fungal pathogens. The sequence is that of Glucan endo-1,3-beta-glucosidase A1 (glcA) from Niallia circulans (Bacillus circulans).